A 645-amino-acid chain; its full sequence is DNA ligase (645 aa).

NAD(+)-binding positions include 30–34 (DIEYD), 79–80 (SM), and Glu-106. The N6-AMP-lysine intermediate role is filled by Lys-108. NAD(+)-binding residues include Arg-129, Glu-163, and Lys-302. 4 residues coordinate Zn(2+): Cys-396, Cys-399, Cys-412, and Cys-417. The BRCT domain maps to 570 to 645 (ISQNVFTKKT…ISEDEFKEML (76 aa)).

Belongs to the NAD-dependent DNA ligase family. LigA subfamily. Mg(2+) is required as a cofactor. The cofactor is Mn(2+).

It catalyses the reaction NAD(+) + (deoxyribonucleotide)n-3'-hydroxyl + 5'-phospho-(deoxyribonucleotide)m = (deoxyribonucleotide)n+m + AMP + beta-nicotinamide D-nucleotide.. In terms of biological role, DNA ligase that catalyzes the formation of phosphodiester linkages between 5'-phosphoryl and 3'-hydroxyl groups in double-stranded DNA using NAD as a coenzyme and as the energy source for the reaction. It is essential for DNA replication and repair of damaged DNA. This chain is DNA ligase, found in Campylobacter hominis (strain ATCC BAA-381 / DSM 21671 / CCUG 45161 / LMG 19568 / NCTC 13146 / CH001A).